The following is a 266-amino-acid chain: MTRIILILTATFFACALGASTGGSHPLRPWWNALRSSGRIVGGFEVPVEEVPFQVSLSGVGSSHFCGGSLLSERWVMTAGHCAASGQTNLQVRIGSSQHASGGQLIKVKKVNRHPKYDEVTTDYDFALLELEETVTFSDSCAPVKLPQKDAPVNEGTCLQVSGWGNTQNPSESSEVLRAAYVPAVSQKECHKAYLSFGGVTDRMVCAGFKEGGKDSCQGDSGGPLVHDNTLVGVVSWGYGCAQAGYPGVYARVASVRDWVKEVSGL.

The first 18 residues, 1-18 (MTRIILILTATFFACALG), serve as a signal peptide directing secretion. The propeptide at 19–39 (ASTGGSHPLRPWWNALRSSGR) is activation peptide. A Peptidase S1 domain is found at 40–265 (IVGGFEVPVE…VRDWVKEVSG (226 aa)). Cysteine 66 and cysteine 82 form a disulfide bridge. Catalysis depends on charge relay system residues histidine 81 and aspartate 125. Disulfide bonds link cysteine 190/cysteine 206 and cysteine 217/cysteine 241. Serine 221 serves as the catalytic Charge relay system.

Belongs to the peptidase S1 family. Midgut.

Its subcellular location is the secreted. It localises to the extracellular space. It carries out the reaction Preferential cleavage: Arg-|-Xaa, Lys-|-Xaa.. Major function may be to aid in digestion of the blood meal. The polypeptide is Trypsin 5G1 (Aedes aegypti (Yellowfever mosquito)).